The primary structure comprises 285 residues: Secreted LysM effector slp2 (285 aa).

Residues 1-16 form the signal peptide; that stretch reads MLPITVVTLFAALAAA. Residues 75–143 form a disordered region; the sequence is GDAAKAGDAA…KGGDAAKGGN (69 aa). Residues 85-116 are compositionally biased toward basic and acidic residues; it reads KGGDAKGGDAKGGDAKGGDAKGGKGGDAKGGK. Over residues 117–139 the composition is skewed to gly residues; the sequence is GGDAAKGGKGGDAAKGGKGGDAA. LysM domains are found at residues 157-201 and 237-281; these read VEHK…VLKI and FTRV…TINL.

This sequence belongs to the secreted LysM effector family.

Functionally, might have a role in sequestration of chitin oligosaccharides (breakdown products of fungal cell walls that are released during invasion and act as triggers of host immunity) to dampen host defense. The protein is Secreted LysM effector slp2 of Pyricularia oryzae (strain 70-15 / ATCC MYA-4617 / FGSC 8958) (Rice blast fungus).